The chain runs to 355 residues: Sorbitol dehydrogenase (355 aa).

Position 2 is an N-acetylalanine (Ala2). Cys43 contacts Zn(2+). Tyr49 provides a ligand contact to substrate. Zn(2+)-binding residues include His68 and Glu69. Glu154 serves as a coordination point for substrate. NAD(+) contacts are provided by residues Ile182, Asp202, Arg207, 271 to 273, and 295 to 297; these read VGL and IFR. Residues Arg297 and Tyr298 each contribute to the substrate site.

It belongs to the zinc-containing alcohol dehydrogenase family. Homotetramer. Zn(2+) serves as cofactor. Expressed in liver.

The protein resides in the mitochondrion membrane. It is found in the cell projection. It localises to the cilium. Its subcellular location is the flagellum. It catalyses the reaction keto-D-fructose + NADH + H(+) = D-sorbitol + NAD(+). In terms of biological role, polyol dehydrogenase that catalyzes the reversible NAD(+)-dependent oxidation of various sugar alcohols. Is active with D-sorbitol (D-glucitol) as substrate, leading to the C2-oxidized product D-fructose. Is a key enzyme in the polyol pathway that interconverts glucose and fructose via sorbitol, which constitutes an important alternate route for glucose metabolism. The protein is Sorbitol dehydrogenase (SORD) of Gallus gallus (Chicken).